The following is a 488-amino-acid chain: Ribulose bisphosphate carboxylase large chain (488 aa).

Residues asparagine 128 and threonine 178 each coordinate substrate. Lysine 180 functions as the Proton acceptor in the catalytic mechanism. Lysine 182 provides a ligand contact to substrate. Residues lysine 206, aspartate 208, and glutamate 209 each coordinate Mg(2+). Lysine 206 is subject to N6-carboxylysine. Residue histidine 298 is the Proton acceptor of the active site. Substrate is bound by residues arginine 299, histidine 331, and serine 383.

Belongs to the RuBisCO large chain family. Type I subfamily. In terms of assembly, heterohexadecamer of 8 large chains and 8 small chains. The cofactor is Mg(2+).

It catalyses the reaction 2 (2R)-3-phosphoglycerate + 2 H(+) = D-ribulose 1,5-bisphosphate + CO2 + H2O. The catalysed reaction is D-ribulose 1,5-bisphosphate + O2 = 2-phosphoglycolate + (2R)-3-phosphoglycerate + 2 H(+). RuBisCO catalyzes two reactions: the carboxylation of D-ribulose 1,5-bisphosphate, the primary event in carbon dioxide fixation, as well as the oxidative fragmentation of the pentose substrate. Both reactions occur simultaneously and in competition at the same active site. This is Ribulose bisphosphate carboxylase large chain from Variovorax paradoxus (strain S110).